The primary structure comprises 484 residues: Glycogen synthase 2 (484 aa).

Lys-15 provides a ligand contact to ADP-alpha-D-glucose.

This sequence belongs to the glycosyltransferase 1 family. Bacterial/plant glycogen synthase subfamily.

The catalysed reaction is [(1-&gt;4)-alpha-D-glucosyl](n) + ADP-alpha-D-glucose = [(1-&gt;4)-alpha-D-glucosyl](n+1) + ADP + H(+). It functions in the pathway glycan biosynthesis; glycogen biosynthesis. Functionally, synthesizes alpha-1,4-glucan chains using ADP-glucose. The chain is Glycogen synthase 2 from Geobacter metallireducens (strain ATCC 53774 / DSM 7210 / GS-15).